The sequence spans 347 residues: Heat-inducible transcription repressor HrcA (347 aa).

It belongs to the HrcA family.

Functionally, negative regulator of class I heat shock genes (grpE-dnaK-dnaJ and groELS operons). Prevents heat-shock induction of these operons. The polypeptide is Heat-inducible transcription repressor HrcA (Lactococcus lactis subsp. cremoris (strain MG1363)).